The chain runs to 392 residues: Lipase (392 aa).

Positions M1–A26 are cleaved as a signal peptide. Residues V27–R95 constitute a propeptide that is removed on maturation. Residues P50–Q69 form a disordered region. Cystine bridges form between C152–C391, C163–C166, and C358–C367. S268 acts as the Nucleophile in catalysis. D327 functions as the Charge relay system in the catalytic mechanism. D379 is a Ca(2+) binding site. H380 (charge relay system) is an active-site residue.

The protein belongs to the AB hydrolase superfamily. Lipase family.

It is found in the secreted. The protein resides in the extracellular space. The enzyme catalyses a triacylglycerol + H2O = a diacylglycerol + a fatty acid + H(+). Lipase activity is maximal at a lipid-water interface (interfacial activation), probably by an induced conformational change that results in an increased accessibility of the active site to the substrate. Functionally, hydrolyzes ester bonds of triglycerides as well as of their derived partial glycerides with a strong 1,3-positional specificity. The chain is Lipase from Rhizopus niveus.